A 138-amino-acid chain; its full sequence is Phospholipase A2 crotoxin basic chain CBa2 (138 aa).

The first 16 residues, 1–16, serve as a signal peptide directing secretion; sequence MRALWIVAVLLVGVEG. 7 cysteine pairs are disulfide-bonded: Cys42-Cys131, Cys44-Cys60, Cys59-Cys111, Cys65-Cys138, Cys66-Cys104, Cys73-Cys97, and Cys91-Cys102. Tyr43, Gly45, and Gly47 together coordinate Ca(2+). His63 is a catalytic residue. Asp64 contributes to the Ca(2+) binding site. Residue Asp105 is part of the active site.

Belongs to the phospholipase A2 family. Group II subfamily. D49 sub-subfamily. In terms of assembly, heterodimer of one of the acidic (CA1, CA2, CA3 or CA4) and one of the basic (CBa1, CBa2, CBb, CBc or CBd) subunits; non-covalently linked. The acidic subunit is non-toxic, without enzymatic activity and comprises 3 peptides that are cross-linked by 5 disulfide bridges. The basic subunit is toxic, has phospholipase A2 activity and is composed of a single chain. Multiple variants of each subunit give different crotoxin complexes that can be subdivided into 2 classes: (1) those of high toxicity, low PLA2 activity (CBb, CBc and CBd linked with high affinity to any CA) and high stability (K(d)=4.5 nM) and (2) those of moderate toxicity, high PLA2 activity (CBa2 linked with low affinity to any CA) and low stability (K(d)=25 nM). Interacts with human NBD1 domain of CFTR. It depends on Ca(2+) as a cofactor. As to expression, expressed by the venom gland.

It localises to the secreted. It catalyses the reaction a 1,2-diacyl-sn-glycero-3-phosphocholine + H2O = a 1-acyl-sn-glycero-3-phosphocholine + a fatty acid + H(+). Functionally, heterodimer CA-CB: Crotoxin is a potent presynaptic neurotoxin that possesses phospholipase A2 (PLA2) activity and exerts a lethal action by blocking neuromuscular transmission. It consists of a non-covalent association of a basic and weakly toxic PLA2 subunit (CBa2, CBb, CBc, or CBd), with a small acidic, non-enzymatic and non-toxic subunit (CA1, CA2, CA3 or CA4). The complex acts by binding to a specific 48-kDa protein (R48) receptor located on presynaptic membranes, forming a transient ternary complex CA-CB-R48, followed by dissociation of the CA-CB complex and release of the CA subunit. At equilibrium, only the CB subunits remain associated with the specific crotoxin receptor. In addition to neurotoxicity, crotoxin has been found to exert myotoxicity, nephrotoxicity, and cardiovascular toxicity. Moreover, anti-inflammatory, immunomodulatory, anti-tumor and analgesic effects of crotoxin have also been reported. Its function is as follows. Monomer CBa2: The basic subunit of crotoxin is a snake venom phospholipase A2 (PLA2) that exhibits weak neurotoxicity (10-fold less than the heterodimer) and strong anticoagulant effects by binding to factor Xa (F10) and inhibiting the prothrombinase activity (IC(50) is 41 nM). In addition, it shows the same effects described for the heterodimer and binds the nucleotide-binding domain (NBD1) of CFTR chloride channels and increases the channel current. PLA2 catalyzes the calcium-dependent hydrolysis of the 2-acyl groups in 3-sn-phosphoglycerides. In Crotalus durissus terrificus (South American rattlesnake), this protein is Phospholipase A2 crotoxin basic chain CBa2.